Consider the following 113-residue polypeptide: Dolichyl-diphosphooligosaccharide--protein glycosyltransferase subunit dad1 (113 aa).

Over M1 to Y30 the chain is Cytoplasmic. Residues L31–F51 traverse the membrane as a helical segment. P52 is a topological domain (lumenal). The helical transmembrane segment at F53–L73 threads the bilayer. Over R74 to R92 the chain is Cytoplasmic. Residues A93–G113 traverse the membrane as a helical segment.

Belongs to the DAD/OST2 family. Component of the oligosaccharyltransferase (OST) complex.

The protein resides in the endoplasmic reticulum membrane. The protein operates within protein modification; protein glycosylation. Its function is as follows. Subunit of the oligosaccharyl transferase (OST) complex that catalyzes the initial transfer of a defined glycan (Glc(3)Man(9)GlcNAc(2) in eukaryotes) from the lipid carrier dolichol-pyrophosphate to an asparagine residue within an Asn-X-Ser/Thr consensus motif in nascent polypeptide chains, the first step in protein N-glycosylation. N-glycosylation occurs cotranslationally and the complex associates with the Sec61 complex at the channel-forming translocon complex that mediates protein translocation across the endoplasmic reticulum (ER). All subunits are required for a maximal enzyme activity. This Xenopus laevis (African clawed frog) protein is Dolichyl-diphosphooligosaccharide--protein glycosyltransferase subunit dad1.